Reading from the N-terminus, the 174-residue chain is Adenine phosphoribosyltransferase (174 aa).

It belongs to the purine/pyrimidine phosphoribosyltransferase family. As to quaternary structure, homodimer.

It is found in the cytoplasm. The enzyme catalyses AMP + diphosphate = 5-phospho-alpha-D-ribose 1-diphosphate + adenine. It participates in purine metabolism; AMP biosynthesis via salvage pathway; AMP from adenine: step 1/1. Its function is as follows. Catalyzes a salvage reaction resulting in the formation of AMP, that is energically less costly than de novo synthesis. This is Adenine phosphoribosyltransferase from Nitrosomonas eutropha (strain DSM 101675 / C91 / Nm57).